The sequence spans 635 residues: Threonine--tRNA ligase (635 aa).

In terms of domain architecture, TGS spans 1-61 (MINISFPDGS…DNDCKLRILT (61 aa)). A catalytic region spans residues 242 to 533 (DHRKLGRELD…LIEEYAGRFP (292 aa)). Cys333, His384, and His510 together coordinate Zn(2+).

Belongs to the class-II aminoacyl-tRNA synthetase family. As to quaternary structure, homodimer. Zn(2+) serves as cofactor.

It localises to the cytoplasm. It carries out the reaction tRNA(Thr) + L-threonine + ATP = L-threonyl-tRNA(Thr) + AMP + diphosphate + H(+). Catalyzes the attachment of threonine to tRNA(Thr) in a two-step reaction: L-threonine is first activated by ATP to form Thr-AMP and then transferred to the acceptor end of tRNA(Thr). Also edits incorrectly charged L-seryl-tRNA(Thr). The chain is Threonine--tRNA ligase from Rickettsia africae (strain ESF-5).